Consider the following 496-residue polypeptide: MFS transporter cpaT (496 aa).

A disordered region spans residues 1–45; sequence MGHQEEPPRICKTPSGHEQGEGPAEKTSKPSTEEVGWDGPTDPAR. Residues 18-32 are compositionally biased toward basic and acidic residues; that stretch reads EQGEGPAEKTSKPST. Asn48 is a glycosylation site (N-linked (GlcNAc...) asparagine). A helical transmembrane segment spans residues 58–78; it reads MGIISYLTFLTPLTSSIVAPA. N-linked (GlcNAc...) asparagine glycosylation occurs at Asn90. The next 5 helical transmembrane spans lie at 93–113, 130–150, 154–174, 180–200, and 212–232; these read LASF…LFLA, FIFT…ALLV, FAGI…ADMF, GVAM…GPIA, and WVFW…LFVL. Asn252 is a glycosylation site (N-linked (GlcNAc...) asparagine). Helical transmembrane passes span 288 to 308, 325 to 345, 367 to 387, 395 to 415, 427 to 449, and 463 to 483; these read VALF…LFTT, GLVY…FGAL, LPPL…YGWS, IMPI…LLPI, AASA…PLAG, and SLLG…YFYG.

Belongs to the major facilitator superfamily.

It is found in the membrane. Its function is as follows. MFS transporter; part of the gene cluster that mediates the biosynthesis of the fungal neurotoxin cyclopiazonic acid (CPA), a nanomolar inhibitor of Ca(2+)-ATPase with a unique pentacyclic indole tetramic acid scaffold. The polypeptide is MFS transporter cpaT (Aspergillus oryzae (Yellow koji mold)).